We begin with the raw amino-acid sequence, 404 residues long: Cysteine desulfurase IscS (404 aa).

Residues 75 to 76, Asn-155, Gln-183, and 203 to 205 contribute to the pyridoxal 5'-phosphate site; these read AT and SGH. Lys-206 carries the post-translational modification N6-(pyridoxal phosphate)lysine. Pyridoxal 5'-phosphate is bound at residue Thr-243. The Cysteine persulfide intermediate role is filled by Cys-328. Cys-328 serves as a coordination point for [2Fe-2S] cluster.

This sequence belongs to the class-V pyridoxal-phosphate-dependent aminotransferase family. NifS/IscS subfamily. Homodimer. Forms a heterotetramer with IscU, interacts with other sulfur acceptors. The cofactor is pyridoxal 5'-phosphate.

The protein localises to the cytoplasm. It catalyses the reaction (sulfur carrier)-H + L-cysteine = (sulfur carrier)-SH + L-alanine. It functions in the pathway cofactor biosynthesis; iron-sulfur cluster biosynthesis. Master enzyme that delivers sulfur to a number of partners involved in Fe-S cluster assembly, tRNA modification or cofactor biosynthesis. Catalyzes the removal of elemental sulfur atoms from cysteine to produce alanine. Functions as a sulfur delivery protein for Fe-S cluster synthesis onto IscU, an Fe-S scaffold assembly protein, as well as other S acceptor proteins. The chain is Cysteine desulfurase IscS from Shewanella putrefaciens (strain CN-32 / ATCC BAA-453).